The primary structure comprises 140 residues: Translation initiation factor 2 subunit beta (140 aa).

Belongs to the eIF-2-beta/eIF-5 family. In terms of assembly, heterotrimer composed of an alpha, a beta and a gamma chain.

Its function is as follows. eIF-2 functions in the early steps of protein synthesis by forming a ternary complex with GTP and initiator tRNA. In Pyrococcus horikoshii (strain ATCC 700860 / DSM 12428 / JCM 9974 / NBRC 100139 / OT-3), this protein is Translation initiation factor 2 subunit beta (eif2b).